The chain runs to 147 residues: MELNNIEIQKIIPHRYPFLLVDKMVEVELGKRGVGIKNVTANEPFFQGHFPGNPIMPGVLMTEALAQVAALICMGLEENKGKLGVFTGIDKCKFRRQVVPGDVLRLEIEMTALRRGIGKAEGKAYVGEELACSASLTFALINPNTDK.

His49 is an active-site residue.

Belongs to the thioester dehydratase family. FabZ subfamily.

Its subcellular location is the cytoplasm. The enzyme catalyses a (3R)-hydroxyacyl-[ACP] = a (2E)-enoyl-[ACP] + H2O. In terms of biological role, involved in unsaturated fatty acids biosynthesis. Catalyzes the dehydration of short chain beta-hydroxyacyl-ACPs and long chain saturated and unsaturated beta-hydroxyacyl-ACPs. This chain is 3-hydroxyacyl-[acyl-carrier-protein] dehydratase FabZ, found in Alkaliphilus metalliredigens (strain QYMF).